The primary structure comprises 336 residues: Probable allantoicase 2 (336 aa).

The protein belongs to the allantoicase family.

The enzyme catalyses allantoate + H2O = (S)-ureidoglycolate + urea. Its pathway is nitrogen metabolism; (S)-allantoin degradation; (S)-ureidoglycolate from allantoate (aminidohydrolase route): step 1/1. This is Probable allantoicase 2 from Burkholderia pseudomallei (strain K96243).